The primary structure comprises 166 residues: Early E3 18.5 kDa glycoprotein (166 aa).

The first 19 residues, 1–19, serve as a signal peptide directing secretion; that stretch reads MGPILVLLVLLSLLEAGSA. Residues 20-131 are Lumenal-facing; it reads NYDPCLDFDP…SKDNIVTFSI (112 aa). An N-linked (GlcNAc...) asparagine; by host glycan is attached at N31. Cystine bridges form between C32–C50 and C44–C106. N-linked (GlcNAc...) asparagine; by host glycans are attached at residues N63, N67, and N97. A helical transmembrane segment spans residues 132–152; that stretch reads AYCLCACLLTALLCVCIHLLV. Topologically, residues 153 to 166 are cytoplasmic; the sequence is TTRIKNANNKEKMP. The Di-lysine motif motif lies at 162-166; the sequence is KEKMP.

The protein belongs to the adenoviridae E19 family. Post-translationally, both disulfide bonds are absolutely critical for the interaction with MHC antigens. N-glycosylated; high-mannose.

The protein resides in the host endoplasmic reticulum membrane. Functionally, binds and retains class I heavy chains in the endoplasmic reticulum during the early period of virus infection, thereby impairing their transport to the cell surface. Also delays the expression of class I alleles that it cannot affect by direct retention. Binds transporters associated with antigen processing (TAP) and acts as a tapasin inhibitor, preventing class I/TAP association. In consequence, infected cells are masked for immune recognition by cytotoxic T-lymphocytes. This Human adenovirus B serotype 11 (strain BC34) (HAdV-11) protein is Early E3 18.5 kDa glycoprotein.